A 390-amino-acid chain; its full sequence is Protein STRICTOSIDINE SYNTHASE-LIKE 3 (390 aa).

An N-terminal signal peptide occupies residues 1–25 (MAMSILAKIFLVFAIYCAIDPFSHS). N-linked (GlcNAc...) asparagine glycosylation is found at asparagine 95 and asparagine 108.

It belongs to the strictosidine synthase family.

The protein localises to the vacuole. This Arabidopsis thaliana (Mouse-ear cress) protein is Protein STRICTOSIDINE SYNTHASE-LIKE 3.